Here is a 217-residue protein sequence, read N- to C-terminus: MOB kinase activator-like 2 (217 aa).

The interval 15–38 is disordered; sequence GKESIRGNYKPKKHPRGSSRHTMR. Residues 23–38 show a composition bias toward basic residues; sequence YKPKKHPRGSSRHTMR. Residues Cys89, Cys94, His167, and His172 each contribute to the Zn(2+) site.

The protein belongs to the MOB1/phocein family.

This Dictyostelium discoideum (Social amoeba) protein is MOB kinase activator-like 2 (mob2).